Here is a 218-residue protein sequence, read N- to C-terminus: Flagellar calcium-binding protein TB-24 (218 aa).

Residues 1 to 27 (MGCSASKDTTNSKDGAASKGGKDGKTT) are disordered. EF-hand domains are found at residues 48 to 83 (ESKSRRIELFKQFDTNGTGKLGFREVLDGCYGILKL), 84 to 119 (DEFTTHLPDIVQRAFDKAKDLGNKVKGVGEEDLVEF), 130 to 165 (YDIFELTVMFDTMDKDGSLLLELQEFKEALPKLKEW), and 167 to 202 (VDITDATTVFNEIDTNGSGVVTFDEFSCWAVTKKLQ). Residues D61, N63, T65, K67, and E72 each contribute to the Ca(2+) site. Positions 143, 145, 147, 154, 180, 182, 184, and 191 each coordinate Ca(2+).

This sequence belongs to the calflagin family.

Its subcellular location is the cell projection. The protein localises to the cilium. It is found in the flagellum. Functionally, may contribute to the rapid motility of the trypanosomes, playing a role either in flagellar structure or in calcium metabolism. Could alternate between a GDP-bound inactive form to a calcium/GTP-bound active form. In Trypanosoma brucei brucei, this protein is Flagellar calcium-binding protein TB-24.